We begin with the raw amino-acid sequence, 362 residues long: N-alpha-acetyltransferase 30 (362 aa).

Positions 1–20 (MAEVPPGPSSLLPPPAPPAP) are enriched in pro residues. Disordered regions lie at residues 1–26 (MAEV…VEPR), 38–88 (CSED…NGLI), and 113–182 (ATTA…EEDE). 2 positions are modified to phosphoserine: Ser-39 and Ser-55. A compositionally biased stretch (acidic residues) spans 39–48 (SEDEEDDEEH). Thr-117 carries the post-translational modification Phosphothreonine. Residues 149 to 165 (AVPSPVEAAAASDPAAA) are compositionally biased toward low complexity. A Phosphoserine modification is found at Ser-152. The segment covering 173-182 (TEQEEEEEDE) has biased composition (acidic residues). 3 positions are modified to phosphoserine: Ser-190, Ser-196, and Ser-199. The region spanning 214-362 (RYVRYESELQ…DALRLKLWLR (149 aa)) is the N-acetyltransferase domain. Lys-233 bears the N6-acetyllysine mark.

This sequence belongs to the acetyltransferase family. MAK3 subfamily. Component of the N-terminal acetyltransferase C (NatC) complex, which is composed of NAA35, NAA38 and NAA30.

Its subcellular location is the cytoplasm. It localises to the nucleus. The catalysed reaction is N-terminal L-methionyl-L-leucyl-[protein] + acetyl-CoA = N-terminal N(alpha)-acetyl-L-methionyl-L-leucyl-[protein] + CoA + H(+). It catalyses the reaction N-terminal L-methionyl-L-isoleucyl-[protein] + acetyl-CoA = N-terminal N(alpha)-acetyl-L-methionyl-L-isoleucyl-[protein] + CoA + H(+). It carries out the reaction N-terminal L-methionyl-L-phenylalanyl-[protein] + acetyl-CoA = N-terminal N(alpha)-acetyl-L-methionyl-L-phenylalanyl-[protein] + CoA + H(+). The enzyme catalyses N-terminal L-methionyl-L-tryptophyl-[protein] + acetyl-CoA = N-terminal N(alpha)-acetyl-L-methionyl-L-tryptophyl-[protein] + CoA + H(+). The catalysed reaction is N-terminal L-methionyl-L-tyrosyl-[protein] + acetyl-CoA = N-terminal N(alpha)-acetyl-L-methionyl-L-tyrosyl-[protein] + CoA + H(+). In terms of biological role, catalytic subunit of the N-terminal acetyltransferase C (NatC) complex. Catalyzes acetylation of the N-terminal methionine residues of peptides beginning with Met-Leu-Ala and Met-Leu-Gly. N-terminal acetylation protects proteins from ubiquitination and degradation by the N-end rule pathway. Necessary for the lysosomal localization and function of ARL8B sugeesting that ARL8B is a NatC substrate. This chain is N-alpha-acetyltransferase 30 (NAA30), found in Homo sapiens (Human).